We begin with the raw amino-acid sequence, 505 residues long: Cholesteryl ester transfer protein (505 aa).

An N-terminal signal peptide occupies residues 1-24 (MLWAGGMRLGMARILLMLVHAAAA). N-linked (GlcNAc...) asparagine glycosylation is found at Asn-68 and Asn-114. Cysteines 169 and 210 form a disulfide. N-linked (GlcNAc...) asparagine glycans are attached at residues Asn-266, Asn-344, and Asn-422.

It belongs to the BPI/LBP/Plunc superfamily. BPI/LBP family. In terms of tissue distribution, highly expressed in liver brain, heart, and spleen. Secreted in plasma.

The protein resides in the secreted. The catalysed reaction is cholesteryl (9Z-octadecenoate)(in) = cholesteryl (9Z-octadecenoate)(out). It catalyses the reaction 1,2,3-tri-(9Z-octadecenoyl)-glycerol(in) = 1,2,3-tri-(9Z-octadecenoyl)-glycerol(out). The enzyme catalyses cholesteryl (9Z,12Z)-octadecadienoate(in) = cholesteryl (9Z,12Z)-octadecadienoate(out). Its function is as follows. Involved in the transfer of neutral lipids, including cholesteryl ester and triglyceride, among lipoprotein particles. Allows the net movement of cholesteryl ester from high density lipoproteins/HDL to triglyceride-rich very low density lipoproteins/VLDL, and the equimolar transport of triglyceride from VLDL to HDL. Regulates the reverse cholesterol transport, by which excess cholesterol is removed from peripheral tissues and returned to the liver for elimination. In Gallus gallus (Chicken), this protein is Cholesteryl ester transfer protein.